The primary structure comprises 329 residues: NAD(+) hydrolase TcpA (329 aa).

Residues 5–134 (VSISYLALEQ…ADCVRFYTVR (130 aa)) form the MPN domain. Positions 192 to 324 (FEYDVFICHA…YVVNEILRVL (133 aa)) constitute a TIR domain. NAD(+)-binding positions include 201–202 (AH) and Ser231. Glu267 is an active-site residue.

It catalyses the reaction NAD(+) + H2O = ADP-D-ribose + nicotinamide + H(+). NAD(+) hydrolase (NADase) that catalyzes cleavage of NAD(+) into ADP-D-ribose (ADPR) and nicotinamide. The protein is NAD(+) hydrolase TcpA of Theionarchaea archaeon (strain DG-70-1).